Reading from the N-terminus, the 401-residue chain is Phosrestin-1 (401 aa).

This sequence belongs to the arrestin family. As to expression, inner and outer segments, and the inner plexiform regions of the retina.

In terms of biological role, undergoes light-induced phosphorylation, probably plays an important role in the photoreceptor transduction. The chain is Phosrestin-1 (Arr2) from Drosophila miranda (Fruit fly).